Reading from the N-terminus, the 549-residue chain is Cytoplasmic trehalase (549 aa).

Substrate contacts are provided by residues arginine 168, 175-176 (WD), asparagine 212, 221-223 (RSQ), 292-294 (RDE), and glycine 324. Catalysis depends on proton donor/acceptor residues aspartate 326 and glutamate 509. Glutamate 525 is a substrate binding site.

It belongs to the glycosyl hydrolase 37 family. Monomer.

It is found in the cytoplasm. It catalyses the reaction alpha,alpha-trehalose + H2O = alpha-D-glucose + beta-D-glucose. It functions in the pathway glycan degradation; trehalose degradation; D-glucose from alpha,alpha-trehalose: step 1/1. Hydrolyzes trehalose to glucose. Could be involved, in cells returning to low osmolarity conditions, in the utilization of the accumulated cytoplasmic trehalose, which was synthesized in response to high osmolarity. This is Cytoplasmic trehalase from Escherichia fergusonii (strain ATCC 35469 / DSM 13698 / CCUG 18766 / IAM 14443 / JCM 21226 / LMG 7866 / NBRC 102419 / NCTC 12128 / CDC 0568-73).